Consider the following 218-residue polypeptide: Capsid protein (218 aa).

Residue M1 is modified to N-acetylmethionine; by host. The segment covering 1–10 (MDKSESTSAG) has biased composition (low complexity). Positions 1–29 (MDKSESTSAGRNRRRRLRRGSRSAPSSAD) are disordered. Over residues 11 to 21 (RNRRRRLRRGS) the composition is skewed to basic residues.

This sequence belongs to the cucumovirus capsid protein family.

It is found in the virion. Functionally, capsid protein. Probably binds RNA and plays a role in packaging. The polypeptide is Capsid protein (Cucumis sativus (Cucumber)).